Reading from the N-terminus, the 407-residue chain is Phosphopentomutase (407 aa).

D10, D306, H311, D347, H348, and H359 together coordinate Mn(2+).

It belongs to the phosphopentomutase family. Requires Mn(2+) as cofactor.

The protein resides in the cytoplasm. It carries out the reaction 2-deoxy-alpha-D-ribose 1-phosphate = 2-deoxy-D-ribose 5-phosphate. The catalysed reaction is alpha-D-ribose 1-phosphate = D-ribose 5-phosphate. It functions in the pathway carbohydrate degradation; 2-deoxy-D-ribose 1-phosphate degradation; D-glyceraldehyde 3-phosphate and acetaldehyde from 2-deoxy-alpha-D-ribose 1-phosphate: step 1/2. In terms of biological role, isomerase that catalyzes the conversion of deoxy-ribose 1-phosphate (dRib-1-P) and ribose 1-phosphate (Rib-1-P) to deoxy-ribose 5-phosphate (dRib-5-P) and ribose 5-phosphate (Rib-5-P), respectively. In Enterobacter sp. (strain 638), this protein is Phosphopentomutase.